Here is a 425-residue protein sequence, read N- to C-terminus: UPF0761 membrane protein XCV0968 (425 aa).

The next 6 membrane-spanning stretches (helical) occupy residues 48–68 (VFALVPLAIVVFGVLSAFPAF), 105–125 (FTVAGMVALVASLLITLHSIE), 154–174 (GTMLAAASMAMAAYVFALPLF), 182–202 (LAEFAWRLAPMAVEFVCIVLI), 216–236 (ALPGALLAVILMEIVKWGFGF), and 250–270 (ALSALPILLLWIYLSWVSVLL).

Belongs to the UPF0761 family.

The protein localises to the cell inner membrane. This is UPF0761 membrane protein XCV0968 from Xanthomonas euvesicatoria pv. vesicatoria (strain 85-10) (Xanthomonas campestris pv. vesicatoria).